Consider the following 1370-residue polypeptide: DNA-directed RNA polymerase subunit beta (1370 aa).

It belongs to the RNA polymerase beta chain family. In terms of assembly, the RNAP catalytic core consists of 2 alpha, 1 beta, 1 beta' and 1 omega subunit. When a sigma factor is associated with the core the holoenzyme is formed, which can initiate transcription.

It catalyses the reaction RNA(n) + a ribonucleoside 5'-triphosphate = RNA(n+1) + diphosphate. In terms of biological role, DNA-dependent RNA polymerase catalyzes the transcription of DNA into RNA using the four ribonucleoside triphosphates as substrates. In Syntrophobacter fumaroxidans (strain DSM 10017 / MPOB), this protein is DNA-directed RNA polymerase subunit beta.